The following is a 305-amino-acid chain: Serine/threonine-protein phosphatase 6 catalytic subunit (305 aa).

Methionine 1 is subject to N-acetylmethionine. Residues aspartate 53, histidine 55, aspartate 81, and asparagine 113 each coordinate Mn(2+). Histidine 114 serves as the catalytic Proton donor. 2 residues coordinate Mn(2+): histidine 163 and histidine 237.

It belongs to the PPP phosphatase family. PP-6 (PP-V) subfamily. As to quaternary structure, protein phosphatase 6 (PP6) holoenzyme is proposed to be a heterotrimeric complex formed by the catalytic subunit, a SAPS domain-containing subunit (PP6R) and an ankyrin repeat-domain containing regulatory subunit (ARS). Interacts with subunits PPP6R1, PPP6R2 and PPP6R3. Interacts with subunit ANKRD28. Interacts with IGBP1. Interacts with MAP3K7. Interacts with NFKBIE. Interacts with TRIM14 and WRNIP1; these interactions positively regulate the RIG-I signaling pathway. Mn(2+) is required as a cofactor. As to expression, ubiquitously expressed in all tissues tested with strongest expression in lung, spleen, liver, kidney and brain. Weaker expression observed in bladder, pancreas, heart and skeletal muscle.

The protein localises to the mitochondrion. It is found in the cytoplasm. The enzyme catalyses O-phospho-L-seryl-[protein] + H2O = L-seryl-[protein] + phosphate. It catalyses the reaction O-phospho-L-threonyl-[protein] + H2O = L-threonyl-[protein] + phosphate. In terms of biological role, catalytic subunit of protein phosphatase 6 (PP6). PP6 is a component of a signaling pathway regulating cell cycle progression in response to IL2 receptor stimulation. N-terminal domain restricts G1 to S phase progression in cancer cells, in part through control of cyclin D13 During mitosis, regulates spindle positioning. Down-regulates MAP3K7 kinase activation of the IL1 signaling pathway by dephosphorylation of MAP3K7. Acts as a regulator of innate immunity by mediating dephosphorylation CGAS, STING1 and RIGI. Also participates in the innate immune defense against viruses by desphosphorylating RIGI, an essential step that triggers RIGI-mediated signaling activation. Also regulates innate immunity by acting as a negative regulator of the cGAS-STING pathway: mediates dephosphorylation and inactivation of CGAS and STING1. CGAS dephosphorylation at 'Ser-420' impairs its ability to bind GTP, thereby inactivating it. The sequence is that of Serine/threonine-protein phosphatase 6 catalytic subunit from Mus musculus (Mouse).